The chain runs to 158 residues: MTAPGARLRIIAIGRDSKGPEADLVARYAARLQPRPEVVALPDGTGSPAEIKRREADAILRRLAAEDLVIALDLGGKAPDSAAFAAMLASWRETSRPLAFVIGGAEGLERRIIERADAVLSLGNLTLPHLLARAVLAEQLYRAQCILAGHPYHRAGRP.

S-adenosyl-L-methionine contacts are provided by residues Leu-72, Gly-103, and Leu-122 to Leu-127.

This sequence belongs to the RNA methyltransferase RlmH family. In terms of assembly, homodimer.

The protein localises to the cytoplasm. It catalyses the reaction pseudouridine(1915) in 23S rRNA + S-adenosyl-L-methionine = N(3)-methylpseudouridine(1915) in 23S rRNA + S-adenosyl-L-homocysteine + H(+). Functionally, specifically methylates the pseudouridine at position 1915 (m3Psi1915) in 23S rRNA. This chain is Ribosomal RNA large subunit methyltransferase H, found in Acidiphilium cryptum (strain JF-5).